We begin with the raw amino-acid sequence, 118 residues long: Small ribosomal subunit protein bTHXc (118 aa).

Residues 1-55 (MASLILGAPPRVTVALPSSRLSSSHSETAGVSLSCFTHQFSLSTSSSSSIPLVYC) constitute a chloroplast transit peptide. Residues 61 to 118 (KTAKGKRFNHSFGNARPRNKSKGRGPERVPVPPAPPRKDKFENDEKIKIDIDESLFSN) are disordered. Positions 96–111 (PRKDKFENDEKIKIDI) are enriched in basic and acidic residues. Serine 117 carries the phosphoserine modification.

Belongs to the bacterial ribosomal protein bTHX family. Part of the 30S ribosomal subunit.

It localises to the plastid. Its subcellular location is the chloroplast. The polypeptide is Small ribosomal subunit protein bTHXc (RPS31) (Arabidopsis thaliana (Mouse-ear cress)).